A 349-amino-acid polypeptide reads, in one-letter code: Fructose-1,6-bisphosphatase class 1 (349 aa).

Mg(2+) contacts are provided by Glu92, Asp113, Leu115, and Asp116. Substrate is bound by residues 116-119 (DGSS), Asn209, Tyr242, and Lys272. Glu278 is a binding site for Mg(2+).

The protein belongs to the FBPase class 1 family. As to quaternary structure, homotetramer. The cofactor is Mg(2+).

It is found in the cytoplasm. The catalysed reaction is beta-D-fructose 1,6-bisphosphate + H2O = beta-D-fructose 6-phosphate + phosphate. It functions in the pathway carbohydrate biosynthesis; Calvin cycle. The polypeptide is Fructose-1,6-bisphosphatase class 1 (Chloroherpeton thalassium (strain ATCC 35110 / GB-78)).